Reading from the N-terminus, the 217-residue chain is Uracil-DNA glycosylase (217 aa).

Asp-62 functions as the Proton acceptor in the catalytic mechanism.

It belongs to the uracil-DNA glycosylase (UDG) superfamily. UNG family.

The protein resides in the cytoplasm. It catalyses the reaction Hydrolyzes single-stranded DNA or mismatched double-stranded DNA and polynucleotides, releasing free uracil.. Its function is as follows. Excises uracil residues from the DNA which can arise as a result of misincorporation of dUMP residues by DNA polymerase or due to deamination of cytosine. The sequence is that of Uracil-DNA glycosylase from Streptococcus pyogenes serotype M28 (strain MGAS6180).